A 196-amino-acid chain; its full sequence is uncharacterized protein (196 aa).

This is an uncharacterized protein from Mycoplasma genitalium (strain ATCC 33530 / DSM 19775 / NCTC 10195 / G37) (Mycoplasmoides genitalium).